We begin with the raw amino-acid sequence, 169 residues long: Transmembrane protein B169L (169 aa).

The next 2 membrane-spanning stretches (helical) occupy residues 28–48 and 60–80; these read NPFI…FAIC and TAIY…YVLN. Asn88 carries an N-linked (GlcNAc...) asparagine; by host glycan. Residues 107 to 169 are disordered; the sequence is DEIIPPISPP…EVIMPSQYNN (63 aa). Residues 140–154 show a composition bias toward low complexity; it reads KPADSKPASSADSKP.

This sequence belongs to the asfivirus B169L family.

The protein resides in the host membrane. It is found in the virion. The sequence is that of Transmembrane protein B169L from Ornithodoros (relapsing fever ticks).